We begin with the raw amino-acid sequence, 1235 residues long: Gem-associated protein 5 (1235 aa).

A WD 1 repeat occupies 55–102 (STRINILALDVSPMWGLGNGGPTKPFAIVGDDLSVQVWDCALGEAVIG). The interval 227-263 (NNLALSAEEWRSRNGGQEEKPKTKPPPLTKSKAAESD) is disordered. Over residues 234-248 (EEWRSRNGGQEEKPK) the composition is skewed to basic and acidic residues. Phosphoserine occurs at positions 289, 290, 351, and 354. The interval 340–368 (DCEPTKPTGPLSDASTISNKNDASDSTEG) is disordered. Positions 352–368 (DASTISNKNDASDSTEG) are enriched in polar residues. Thr-355 is modified (phosphothreonine). The residue at position 357 (Ser-357) is a Phosphoserine. Thr-411 is modified (phosphothreonine). WD repeat units follow at residues 428 to 469 (ISAE…HAGK), 475 to 512 (KTAG…KMLR), 565 to 605 (TVAF…TSCL), 611 to 650 (YVSS…VKTH), 690 to 730 (TIVN…EKSW), 739 to 779 (LFAR…RNWK), and 788 to 828 (TEKA…KPPL). The LXXLL motif motif lies at 443–447 (LETLL). The segment covering 963-980 (KEQNNRSAKECPKCKEQS) has biased composition (basic and acidic residues). Positions 963–983 (KEQNNRSAKECPKCKEQSPDS) are disordered.

Component of the core survival motor neuron (SMN) complex composed of Smn, Gem2, Gem3, rig/Gem5 and one of 3 almost identical Gem4 paralogs encoded by Glos/Gem4a, Gem4b or Gem4c. Interacts with nuclear receptors EcR, svp (seven up), usp (ultraspiracle), Hr39 and Hr3. As to expression, expressed in the brain and salivary glands of early and late second instar larvae. Expressed in nurse cells and oocytes.

The protein resides in the nucleus. Its subcellular location is the cytoplasm. It localises to the U-body. It is found in the gem. In terms of biological role, component of the survival motor neuron (SMN) complex that catalyzes the assembly of small nuclear ribonucleoproteins (snRNPs), the building blocks of the spliceosome, and thereby plays an important role in the splicing of cellular pre-mRNAs. Nuclear receptor cofactor for the ecdysone-regulated processes of molting and puparium formation. Acts downstream from ecdysone biosynthesis and release to control the expression of specific ecdysone-regulated genes such as Eip74EF (E74). Essential in muscle and neuronal tissues for motor function, including climbing ability and flight. In Drosophila melanogaster (Fruit fly), this protein is Gem-associated protein 5.